Reading from the N-terminus, the 1225-residue chain is DNA-directed RNA polymerase subunit beta' (1225 aa).

The Zn(2+) site is built by Cys-60, Cys-62, Cys-75, and Cys-78. Residues Asp-450, Asp-452, and Asp-454 each contribute to the Mg(2+) site. The Zn(2+) site is built by Cys-818, Cys-892, Cys-899, and Cys-902.

Belongs to the RNA polymerase beta' chain family. The RNAP catalytic core consists of 2 alpha, 1 beta, 1 beta' and 1 omega subunit. When a sigma factor is associated with the core the holoenzyme is formed, which can initiate transcription. Mg(2+) is required as a cofactor. Zn(2+) serves as cofactor.

It carries out the reaction RNA(n) + a ribonucleoside 5'-triphosphate = RNA(n+1) + diphosphate. In terms of biological role, DNA-dependent RNA polymerase catalyzes the transcription of DNA into RNA using the four ribonucleoside triphosphates as substrates. The sequence is that of DNA-directed RNA polymerase subunit beta' from Streptococcus pneumoniae (strain ATCC 700669 / Spain 23F-1).